The sequence spans 533 residues: DEAD-box ATP-dependent RNA helicase CshA (533 aa).

The short motif at 2-30 is the Q motif element; sequence TTFRELGLSDSLLQSVESMGFEEATPIQA. In terms of domain architecture, Helicase ATP-binding spans 33-203; the sequence is IPHALQGKDI…ERFMTEPQHI (171 aa). 46–53 contacts ATP; that stretch reads AQTGTGKT. The DEAD box motif lies at 151–154; that stretch reads DEAD. Residues 214-374 enclose the Helicase C-terminal domain; the sequence is NIQQFYLEVQ…RMDAPTLDEA (161 aa). Residues 428 to 533 are disordered; sequence TTPIALTSEP…ERKHHSRPQA (106 aa). Positions 458 to 512 are enriched in basic and acidic residues; that stretch reads DGNRNRSRDGRGGGDGRNRDRNRDGRNRDGNRDRNRDGNRDRNRDGGSRGRRGEG. Positions 524–533 are enriched in basic residues; it reads ERKHHSRPQA.

Belongs to the DEAD box helicase family. CshA subfamily. In terms of assembly, oligomerizes, may be a member of the RNA degradosome.

It localises to the cytoplasm. It carries out the reaction ATP + H2O = ADP + phosphate + H(+). Functionally, DEAD-box RNA helicase possibly involved in RNA degradation. May work in conjunction with the cold shock proteins to ensure proper initiation of transcription at low and optimal temperatures. Unwinds dsRNA in both 5'- and 3'-directions and shows RNA-dependent ATPase activity. Probably has a somewhat redundant function with cshB, as cshA can partially complement the growth effects of a cshB deletion. Plays a role in adaptation to cold, oxididant and pH stress. In Bacillus cereus (strain ATCC 14579 / DSM 31 / CCUG 7414 / JCM 2152 / NBRC 15305 / NCIMB 9373 / NCTC 2599 / NRRL B-3711), this protein is DEAD-box ATP-dependent RNA helicase CshA.